A 443-amino-acid chain; its full sequence is Serine/threonine-protein phosphatase 2A 55 kDa regulatory subunit B beta isoform (443 aa).

7 WD repeats span residues 22 to 61, 87 to 128, 171 to 209, 220 to 260, 279 to 317, 334 to 375, and 410 to 443; these read TEADIISTVEFNSTGELLATGDKGGRVVIFQREQENKNQP, EIEE…KRPE, AHTYHINSISVNSDYETYMSADDLRINLWNLEITNRSFN, ELTE…LCDR, EIISSISDVKFNHSGRYIMTRDYLTVKVWDLNMENRPIE, ENDC…DVTL, and DFSKKILHTAWHPSENIIAVAATNNLYIFQDKVN.

The protein belongs to the phosphatase 2A regulatory subunit B family. As to quaternary structure, PP2A consists of a common heterodimeric core enzyme, composed of a 36 kDa catalytic subunit (subunit C) and a 65 kDa constant regulatory subunit (PR65 or subunit A), that associates with a variety of regulatory subunits.

It localises to the cytoplasm. It is found in the cytoskeleton. The protein resides in the membrane. Its function is as follows. The B regulatory subunit might modulate substrate selectivity and catalytic activity, and might also direct the localization of the catalytic enzyme to a particular subcellular compartment. Negatively controls the initiation of oocyte maturation. The sequence is that of Serine/threonine-protein phosphatase 2A 55 kDa regulatory subunit B beta isoform (ppp2r2b) from Xenopus tropicalis (Western clawed frog).